The chain runs to 100 residues: Small ribosomal subunit protein bS21 (100 aa).

A disordered region spans residues K61 to R100. Residues A78–R100 show a composition bias toward gly residues.

It belongs to the bacterial ribosomal protein bS21 family.

This chain is Small ribosomal subunit protein bS21, found in Rhodopseudomonas palustris (strain BisB18).